Here is a 468-residue protein sequence, read N- to C-terminus: ATP-dependent protease ATPase subunit HslU (468 aa).

Residues valine 22 and 64-69 (GVGKTE) each bind ATP. Residues 166-187 (FGNNDEEDEEPPTEDIKTKRSE) form a disordered region. A compositionally biased stretch (acidic residues) spans 169–178 (NDEEDEEPPT). ATP contacts are provided by aspartate 281, glutamate 346, and arginine 418.

It belongs to the ClpX chaperone family. HslU subfamily. As to quaternary structure, a double ring-shaped homohexamer of HslV is capped on each side by a ring-shaped HslU homohexamer. The assembly of the HslU/HslV complex is dependent on binding of ATP.

The protein localises to the cytoplasm. Functionally, ATPase subunit of a proteasome-like degradation complex; this subunit has chaperone activity. The binding of ATP and its subsequent hydrolysis by HslU are essential for unfolding of protein substrates subsequently hydrolyzed by HslV. HslU recognizes the N-terminal part of its protein substrates and unfolds these before they are guided to HslV for hydrolysis. This Staphylococcus carnosus (strain TM300) protein is ATP-dependent protease ATPase subunit HslU.